The primary structure comprises 558 residues: CTP synthase (558 aa).

The segment at M1–L270 is amidoligase domain. S13 is a CTP binding site. Position 13 (S13) interacts with UTP. ATP-binding positions include S14–I19 and D71. D71 and E144 together coordinate Mg(2+). Residues D151–E153, K191–Q196, and K227 each bind CTP. UTP is bound by residues K191–Q196 and K227. The region spanning T295–K547 is the Glutamine amidotransferase type-1 domain. G356 contacts L-glutamine. Residue C383 is the Nucleophile; for glutamine hydrolysis of the active site. L-glutamine-binding positions include L384 to Q387, E407, and R473. Catalysis depends on residues H520 and E522.

The protein belongs to the CTP synthase family. Homotetramer.

It catalyses the reaction UTP + L-glutamine + ATP + H2O = CTP + L-glutamate + ADP + phosphate + 2 H(+). The enzyme catalyses L-glutamine + H2O = L-glutamate + NH4(+). It carries out the reaction UTP + NH4(+) + ATP = CTP + ADP + phosphate + 2 H(+). The protein operates within pyrimidine metabolism; CTP biosynthesis via de novo pathway; CTP from UDP: step 2/2. With respect to regulation, allosterically activated by GTP, when glutamine is the substrate; GTP has no effect on the reaction when ammonia is the substrate. The allosteric effector GTP functions by stabilizing the protein conformation that binds the tetrahedral intermediate(s) formed during glutamine hydrolysis. Inhibited by the product CTP, via allosteric rather than competitive inhibition. Catalyzes the ATP-dependent amination of UTP to CTP with either L-glutamine or ammonia as the source of nitrogen. Regulates intracellular CTP levels through interactions with the four ribonucleotide triphosphates. The polypeptide is CTP synthase (Polynucleobacter necessarius subsp. necessarius (strain STIR1)).